The primary structure comprises 586 residues: Germ cell nuclear acidic protein (586 aa).

Disordered stretches follow at residues 17-119, 176-202, 217-266, and 279-318; these read GWDR…LSSE, KAKTVKTPKSVQKTKKPAPSLCNSPVF, TWRT…SSEE, and LGGRTSASPMPSAEPKPQRPCLSTPSATGRKTGSQVPVKD. Basic and acidic residues predominate over residues 65–76; that stretch reads SGKENRSQEEHI. The span at 94–107 shows a compositional bias: polar residues; the sequence is TPKSTFKQSASSAQ. The segment covering 176-191 has biased composition (basic residues); that stretch reads KAKTVKTPKSVQKTKK. Residues 225-244 are compositionally biased toward basic and acidic residues; the sequence is PPSDEHQATSKDREETEKPR. Polar residues predominate over residues 299–313; sequence CLSTPSATGRKTGSQ. A SprT-like domain is found at 383–482; it reads KLYQLYNTSV…LYARKAMLAH (100 aa).

It belongs to the serine-aspartate repeat-containing protein (SDr) family.

Its subcellular location is the nucleus. The protein resides in the PML body. It localises to the chromosome. Functionally, may play a role in DNA-protein cross-links (DPCs) clearance, ensuring the genomic stability by protecting germ cells and early embryos from various sources of damage. The sequence is that of Germ cell nuclear acidic protein (gcna) from Danio rerio (Zebrafish).